The primary structure comprises 407 residues: Phosphopentomutase (407 aa).

6 residues coordinate Mn(2+): D10, D306, H311, D347, H348, and H359.

Belongs to the phosphopentomutase family. Mn(2+) serves as cofactor.

It is found in the cytoplasm. The enzyme catalyses 2-deoxy-alpha-D-ribose 1-phosphate = 2-deoxy-D-ribose 5-phosphate. It catalyses the reaction alpha-D-ribose 1-phosphate = D-ribose 5-phosphate. It functions in the pathway carbohydrate degradation; 2-deoxy-D-ribose 1-phosphate degradation; D-glyceraldehyde 3-phosphate and acetaldehyde from 2-deoxy-alpha-D-ribose 1-phosphate: step 1/2. Its function is as follows. Isomerase that catalyzes the conversion of deoxy-ribose 1-phosphate (dRib-1-P) and ribose 1-phosphate (Rib-1-P) to deoxy-ribose 5-phosphate (dRib-5-P) and ribose 5-phosphate (Rib-5-P), respectively. This chain is Phosphopentomutase, found in Cronobacter sakazakii (strain ATCC BAA-894) (Enterobacter sakazakii).